The primary structure comprises 342 residues: 29 kDa ribonucleoprotein, chloroplastic (342 aa).

A chloroplast-targeting transit peptide spans 1–65 (MSASASSLSA…PAEYPSRFVR (65 aa)). The 79-residue stretch at 99–177 (LKLFVGNLSF…RPLRVNAGPP (79 aa)) folds into the RRM 1 domain. Residues S107 and S204 each carry the phosphoserine modification. The interval 167–255 (GRPLRVNAGP…GSGSGSGSGS (89 aa)) is disordered. A linker (Gly-rich) region spans residues 178 to 256 (PPKREESFSR…SGSGSGSGSG (79 aa)). Composition is skewed to gly residues over residues 190–237 (RSGG…GYGG) and 245–255 (SGSGSGSGSGS). The RRM 2 domain maps to 257 to 335 (NRLYVGNLSW…RQIRVSEAEA (79 aa)).

It localises to the plastid. The protein localises to the chloroplast. In terms of biological role, stabilizes specific chloroplast mRNAs. Required for normal chloroplast development under cold stress conditions by stabilizing transcripts of numerous mRNAs under these conditions. This is 29 kDa ribonucleoprotein, chloroplastic from Arabidopsis thaliana (Mouse-ear cress).